The chain runs to 103 residues: Small ribosomal subunit protein uS10 (103 aa).

This sequence belongs to the universal ribosomal protein uS10 family. As to quaternary structure, part of the 30S ribosomal subunit.

In terms of biological role, involved in the binding of tRNA to the ribosomes. In Natranaerobius thermophilus (strain ATCC BAA-1301 / DSM 18059 / JW/NM-WN-LF), this protein is Small ribosomal subunit protein uS10.